We begin with the raw amino-acid sequence, 4473 residues long: Plectin (4473 aa).

Calponin-homology (CH) domains lie at 1–74 (DGHN…LHFQ) and 87–192 (MTAK…DAMP). Residues 1–192 (DGHNLISLLE…YVSSLYDAMP (192 aa)) are actin-binding. Residues 1 to 1259 (DGHNLISLLE…SELTTLTSQY (1259 aa)) are globular 1. A Spectrin 1 repeat occupies 449–508 (RYLQDLLAWVEENQRRIDSAEWGVDLPSVEAQLGSHRGMHQSIEEFRAKIERARNDESQL). Phosphoserine is present on serine 509. 2 Spectrin repeats span residues 529-613 (KLLN…REDH) and 626-719 (LQTQ…AIVQ). Threonine 604 carries the phosphothreonine modification. One can recognise an SH3 domain in the interval 730 to 787 (RGHVPLMAVCDYKQVEVTVHKGDQCQLVGPAQPSHWKVLRGPSSEAAVPSVCFLVPPP). At serine 836 the chain carries Phosphoserine. A Spectrin 4 repeat occupies 1104 to 1204 (RERVNQLLER…QKFAKQYINA (101 aa)). Serine 1224 carries the post-translational modification Phosphoserine. Residues 1258–2548 (QYIKFISETL…EEIAATQAAA (1291 aa)) adopt a coiled-coil conformation. Residues 1260-2544 (IKFISETLRR…LAHSEEIAAT (1285 aa)) form a central fibrous rod domain region. 2 disordered regions span residues 1274–1293 (ERLAEQQRAEERERLAEGEA) and 1407–1434 (RAEEAEAQKRQAQEEAERLRRQVQDESQ). Serine 1510 is subject to Phosphoserine. An N6-acetyllysine modification is found at lysine 1514. 5 disordered regions span residues 1529–1550 (VTQLREKAERRAQQQAEAERAR), 1582–1616 (SLAQADAEKQKEEAEREARRRGKAEEQAVRQRELA), 1881–1929 (AEDT…AARQ), 1950–1971 (LRERAEQESARQLQLAQEAAQK), and 2003–2098 (ERLR…KHKK). Basic and acidic residues-rich tracts occupy residues 1587–1616 (DAEKQKEEAEREARRRGKAEEQAVRQRELA), 1881–1897 (AEDTMRSKEQAEQEAAR), and 1905–1917 (EEQRRREAEERVQ). Residues 1959–1968 (ARQLQLAQEA) are compositionally biased toward low complexity. A compositionally biased stretch (basic and acidic residues) spans 2003 to 2047 (ERLRGEAEAARRAAEEAEEAREQAEREAAQSRKQVEEAERLKQSA). Residues 2048–2061 (EEQAQARAQAQAAA) are compositionally biased toward low complexity. Basic and acidic residues predominate over residues 2062 to 2077 (EKLRKEAEQEAARRAQ). Serine 2420 is subject to Phosphoserine. Residue lysine 2425 is modified to N6-acetyllysine. Residues 2457-2476 (REEQQRQQRQMEQEKQELVA) are disordered. The interval 2545–4473 (QAAAAKALPN…SLGGPESAVA (1929 aa)) is globular 2. Phosphoserine occurs at positions 2563 and 2591. Plectin repeat units lie at residues 2615–2652 (RQYLQGRSSIAGLLLKPTDEKLSVYTALQRQLLSPGTA), 2653–2690 (LILLEAQAASGFLLDPVRNRRLTVNEPVKEGVVGPELH), 2691–2728 (HKLLSAERAVTGYKDPYTGEQISLFQAMKKDLLVRDHA), 2729–2766 (IRLLEAQIATGGIIDTVHSHRVPVDVAYQRGYFDEEMS), and 2770–2804 (ADPGDDTKGFFDPNTHENLTYLQLLERCVEDPETG). Residue threonine 2675 is modified to Phosphothreonine. Tyrosine 2822 carries the post-translational modification Phosphotyrosine. Lysine 2842 and lysine 2880 each carry N6-acetyllysine. Plectin repeat units lie at residues 2905–2942 (ALVPAAELLESGVISHELYQQLQRGERSVREVAEADSV), 2943–2980 (RRALRGASVIAGVWLEEAGQKLSIYEALKKDLLQPDVA), 2981–3018 (VALLEAQAGTGHIIDPATSARLTVDEAVRAGLVGPELH), 3019–3056 (EKLLSAEKAVTGYRDPYSGQSVSLFQALKKGLIPREQG), and 3057–3094 (LRLLDAQLSTGGMVDPSKSHRVPLDVAYARGYLDKETN). Tyrosine 3151 is modified (phosphotyrosine). At lysine 3209 the chain carries N6-acetyllysine. Plectin repeat units lie at residues 3274–3311 (RTLLQGSGCLAGVYLEDSKEKVTIYEAMRRGLLRPSTA), 3312–3349 (TLLLEAQAATGFLVDPVRNQRLYVHEAVKAGVVGPELH), 3350–3387 (EKLLSAEKAVTGYKDPYSGTTISLFQAMKKGLVLREHA), 3388–3425 (IRLLEAQIATGGIIDPVHSHRLPVDVAYQRGYFDEEMS), and 3429–3463 (ADPSDDTKGFFDPNTHENLTYLQLLERCVEDPETG). Position 3574 is a phosphothreonine (threonine 3574). At tyrosine 3579 the chain carries Phosphotyrosine. Plectin repeat units follow at residues 3609–3646 (WRYLYGTGSVAGVYLPGSRQTLTIYQALKKGLLSAEVA), 3647–3684 (RLLLEAQAATGFLLDPVKGERLTVDEAVRKGLVGPELH), 3685–3722 (DRLLSAERAVTGYRDPYTEQTISLFQAMKKELIPAEEA), 3723–3760 (LRLLDAQLATGGIVDPRLGFHLPLEVAYQRGYLNKDTH), 3764–3797 (SEPSEVRSYVDPSTDERLSYTQLLKRCRRDDGSG), and 3800–3834 (LLPLSDARRLTFRGLRKQITVEELVRSQVMDEATA). Position 3819 is a phosphothreonine (threonine 3819). Serine 3843 bears the Phosphoserine mark. Plectin repeat units follow at residues 3852–3889 (QKFLEGTSCIAGVFVDATKERLSVYQAMKKGIIRPGTA), 3890–3927 (FELLEAQAATGYVIDPIKGLKLTVEEAVRMGIVGPEFK), 3928–3965 (DRLLSAERAVTGYKDPYSGKLISLFQAMKKGLILKDHG), 3966–4003 (IRLLEAQIATGGIIDPEESHRLPVEVAYKRGLFDEEMN), 4007–4041 (TDPSDDTKGFFDPNTEENLTYLQLMERCITDPQTG), and 4043–4094 (RLLP…HQTY). Positions 4039-4089 (QTGLRLLPLKEKKRERKTSSKSSVRKRRVVIVDPETSKEMSVYEAYRKGLI) are binding to intermediate filaments. Phosphoserine is present on residues serine 4171, serine 4173, serine 4174, serine 4175, serine 4178, serine 4179, serine 4180, and serine 4181. Residue tyrosine 4182 is modified to Phosphotyrosine. Phosphoserine is present on residues serine 4185, serine 4189, and serine 4195. 5 Plectin repeats span residues 4197-4234 (SDPTEETGPVAGILDTETLEKVSITEAMHRNLVDNITG), 4235-4272 (QRLLEAQACTGGIIDPSTGERFPVTEAVNKGLVDKIMV), 4273-4310 (DRINLAQKAFCGFEDPRTKTKMSAAQALKKGWLYYEAG), 4311-4348 (QRFLEVQYLTGGLIEPDTPGRVPLDEALQRGTVDARTA), and 4349-4386 (QKLRDVSAYSKYLTCPKTKLKISYKDALDRSMVEEGTG). Threonine 4200 is modified (phosphothreonine). The residue at position 4328 (threonine 4328) is a Phosphothreonine; by CDK1. Serine 4396 and serine 4402 each carry phosphoserine. The span at 4400–4460 (YYSPYSVSGS…SGYGRRYASG (61 aa)) shows a compositional bias: low complexity. Residues 4400-4473 (YYSPYSVSGS…SLGGPESAVA (74 aa)) form a disordered region. Tyrosine 4404 is subject to Phosphotyrosine. 3 positions are modified to phosphoserine: serine 4405, serine 4407, and serine 4411. Threonine 4412 carries the post-translational modification Phosphothreonine. Positions 4414-4429 (GSRTGSRTGSRAGSRR) are 4 X 4 AA tandem repeats of G-S-R-X. Serine 4415 bears the Phosphoserine mark. An omega-N-methylarginine mark is found at arginine 4416 and arginine 4429. A phosphoserine mark is found at serine 4431 and serine 4464.

This sequence belongs to the plakin or cytolinker family. As to quaternary structure, homodimer or homotetramer. Interacts (via actin-binding domain) with SYNE3. Interacts (via calponin-homology (CH) 1 domain) with VIM (via rod region). Interacts (via N-terminus) with DST isoform 2 (via N-terminus). Interacts with FER. Interacts with TOR1A. Interacts with ANK3. Identified in complexes that contain VIM, EZR, AHNAK, BFSP1, BFSP2, ANK2, PLEC, PRX and spectrin. Phosphorylated by CDK1; regulates dissociation from intermediate filaments during mitosis.

It localises to the cytoplasm. The protein resides in the cytoskeleton. The protein localises to the cell junction. Its subcellular location is the hemidesmosome. It is found in the cell projection. It localises to the podosome. Interlinks intermediate filaments with microtubules and microfilaments and anchors intermediate filaments to desmosomes or hemidesmosomes. May be involved not only in the cross-linking and stabilization of cytoskeletal intermediate filaments network, but also in the regulation of their dynamics. The chain is Plectin (PLEC) from Cricetulus griseus (Chinese hamster).